Reading from the N-terminus, the 473-residue chain is Xylosidase/arabinosidase (473 aa).

Asp-18 functions as the Proton acceptor in the catalytic mechanism. The active-site Proton donor is Glu-209.

Belongs to the glycosyl hydrolase 43 family. In terms of assembly, homotetramer.

The enzyme catalyses Hydrolysis of (1-&gt;4)-beta-D-xylans, to remove successive D-xylose residues from the non-reducing termini.. It catalyses the reaction Hydrolysis of terminal non-reducing alpha-L-arabinofuranoside residues in alpha-L-arabinosides.. This is Xylosidase/arabinosidase (xylA) from Thermoclostridium stercorarium (Clostridium stercorarium).